Here is a 334-residue protein sequence, read N- to C-terminus: Ornithine carbamoyltransferase (334 aa).

Carbamoyl phosphate is bound by residues 57-60 (STRT), Q84, R108, and 135-138 (HPTQ). Residues N169, D233, and 237-238 (SM) contribute to the L-ornithine site. Carbamoyl phosphate-binding positions include 275-276 (CL) and R320.

This sequence belongs to the aspartate/ornithine carbamoyltransferase superfamily. OTCase family.

It localises to the cytoplasm. The catalysed reaction is carbamoyl phosphate + L-ornithine = L-citrulline + phosphate + H(+). Its pathway is amino-acid biosynthesis; L-arginine biosynthesis; L-arginine from L-ornithine and carbamoyl phosphate: step 1/3. Reversibly catalyzes the transfer of the carbamoyl group from carbamoyl phosphate (CP) to the N(epsilon) atom of ornithine (ORN) to produce L-citrulline. The polypeptide is Ornithine carbamoyltransferase (Vibrio campbellii (strain ATCC BAA-1116)).